A 231-amino-acid polypeptide reads, in one-letter code: Orotidine 5'-phosphate decarboxylase (231 aa).

Substrate is bound by residues Asp11, Lys34, 61–70, Thr117, Arg179, Gln188, Gly208, and Arg209; that span reads DLKLHDIPNT. Lys63 (proton donor) is an active-site residue.

Belongs to the OMP decarboxylase family. Type 1 subfamily. Homodimer.

The catalysed reaction is orotidine 5'-phosphate + H(+) = UMP + CO2. It functions in the pathway pyrimidine metabolism; UMP biosynthesis via de novo pathway; UMP from orotate: step 2/2. Catalyzes the decarboxylation of orotidine 5'-monophosphate (OMP) to uridine 5'-monophosphate (UMP). This is Orotidine 5'-phosphate decarboxylase from Streptococcus thermophilus (strain CNRZ 1066).